The following is a 172-amino-acid chain: Stellate protein CG33239/CG33241 (172 aa).

Belongs to the casein kinase 2 subunit beta family. Interacts in vitro with the casein kinase 2 alpha subunit (CkII-alpha). The relevance of such interaction is however unclear in vivo. As to expression, probably not expressed in wild-type flies. In males lacking the Y chromosome, it is testis-specific and constitutes the main component of star-shaped crystals.

In terms of biological role, unknown. In males lacking the Y chromosome, its strong overexpression leads to the appearance of proteinaceous star-shaped crystals in the primary spermatocytes causing meiotic drive, possibly by interfering with normal casein kinase 2 activity. The polypeptide is Stellate protein CG33239/CG33241 (Ste:CG33239) (Drosophila melanogaster (Fruit fly)).